A 150-amino-acid chain; its full sequence is Globin-1 (150 aa).

The Globin domain occupies Pro11–Tyr150. Heme b contacts are provided by His74 and His106.

Belongs to the globin family. In terms of assembly, monomer.

This chain is Globin-1, found in Mordacia mordax (Southern hemisphere lamprey).